A 345-amino-acid chain; its full sequence is Growth hormone-inducible transmembrane protein (345 aa).

A mitochondrion-targeting transit peptide spans 1-45; that stretch reads MLAARLVCLRTLPSRVFHPAFTKASPVVKNSITKNQWLLTPSREY. The Mitochondrial matrix segment spans residues 46–82; the sequence is ATKTRIGIRRGRTGQELKEAALEPSMEKIFKIDQMGR. Residues 83-103 form a helical membrane-spanning segment; that stretch reads WFVAGGAAVGLGALCYYGLGL. Over 104–125 the chain is Mitochondrial intermembrane; that stretch reads SNEIGAIEKAVIWPQYVKDRIH. A helical membrane pass occupies residues 126–146; that stretch reads STYMYLAGSIGLTALSAIAIS. Residues 147–159 lie on the Mitochondrial matrix side of the membrane; the sequence is RTPVLMNFMMRGS. Residues 160-180 form a helical membrane-spanning segment; it reads WVTIGVTFAAMVGAGMLVRSI. The Mitochondrial intermembrane segment spans residues 181–190; it reads PYDQSPGPKH. The chain crosses the membrane as a helical span at residues 191-211; it reads LAWLLHSGVMGAVVAPLTILG. Topologically, residues 212–213 are mitochondrial matrix; sequence GP. A helical transmembrane segment spans residues 214 to 234; that stretch reads LLIRAAWYTAGIVGGLSTVAM. Residues 235-244 lie on the Mitochondrial intermembrane side of the membrane; it reads CAPSEKFLNM. A helical membrane pass occupies residues 245–265; that stretch reads GAPLGVGLGLVFVSSLGSMFL. The Mitochondrial matrix segment spans residues 266–271; sequence PPTTVA. The chain crosses the membrane as a helical span at residues 272 to 292; the sequence is GATLYSVAMYGGLVLFSMFLL. Residues 293 to 345 lie on the Mitochondrial intermembrane side of the membrane; that stretch reads YDTQKVIKRAEVSPMYGVQKYDPINSMLSIYMDTLNIFMRVATMLATGGNRKK.

Belongs to the BI1 family. As to quaternary structure, interacts with LETM1. Interacts with AFG3L2. Post-translationally, undergoes AFG3L2-mediated proteolytic degradation, upon hyperpolarization of mitochondria.

It is found in the mitochondrion inner membrane. The enzyme catalyses Ca(2+)(in) + 2 H(+)(out) = Ca(2+)(out) + 2 H(+)(in). The catalysed reaction is K(+)(in) + H(+)(out) = K(+)(out) + H(+)(in). Plays an important role in maintenance of mitochondrial morphology and in mediating either calcium or potassium/proton antiport. Mediates proton-dependent calcium efflux from mitochondrion. Also functions as an electroneutral mitochondrial proton/potassium exchanger. Required for the mitochondrial tubular network and cristae organization. Involved in apoptotic release of cytochrome c. Inhibits the proteolytic activity of AFG3L2, stimulating respiration and stabilizing respiratory enzymes in actively respiring mitochondria. However, when mitochondria become hyperpolarized, GHITM loses its inhibitory activity toward AFG3L2 and the now the active AFG3L2 turns first on GHITM and, if hyperpolarization persists, on other proteins of the mitochondria, leading to a broad remodeling of the mitochondrial proteome. This chain is Growth hormone-inducible transmembrane protein (GHITM), found in Homo sapiens (Human).